Consider the following 293-residue polypeptide: Sec-independent protein translocase protein TatC (293 aa).

6 helical membrane passes run 35-55 (AAIA…QPFI), 87-107 (LLKV…LYQA), 123-143 (LFGF…ISYF), 173-193 (ILKF…LVGI), 204-224 (ILKS…LTAP), and 228-248 (IMMM…AIGI).

This sequence belongs to the TatC family. As to quaternary structure, the Tat system comprises two distinct complexes: a TatABC complex, containing multiple copies of TatA, TatB and TatC subunits, and a separate TatA complex, containing only TatA subunits. Substrates initially bind to the TatABC complex, which probably triggers association of the separate TatA complex to form the active translocon.

It localises to the cell membrane. In terms of biological role, part of the twin-arginine translocation (Tat) system that transports large folded proteins containing a characteristic twin-arginine motif in their signal peptide across membranes. Together with TatB, TatC is part of a receptor directly interacting with Tat signal peptides. The polypeptide is Sec-independent protein translocase protein TatC (Rothia mucilaginosa (strain DY-18) (Stomatococcus mucilaginosus)).